We begin with the raw amino-acid sequence, 210 residues long: Cytochrome c4 (210 aa).

Positions 1 to 20 are cleaved as a signal peptide; it reads MNKVLVSLLLTLGITGMAHA. The heme c site is built by Cys-34, Cys-37, His-38, Met-86, Cys-139, Cys-142, His-143, and Met-187.

Post-translationally, binds 2 heme c groups covalently per subunit.

It localises to the periplasm. Functionally, diheme, high potential cytochrome c believed to be an intermediate electron donor to terminal oxidation systems. The sequence is that of Cytochrome c4 (cc4) from Stutzerimonas stutzeri (Pseudomonas stutzeri).